We begin with the raw amino-acid sequence, 386 residues long: Succinyl-diaminopimelate desuccinylase (386 aa).

Histidine 75 serves as a coordination point for Zn(2+). Aspartate 77 is a catalytic residue. Aspartate 108 contributes to the Zn(2+) binding site. The active-site Proton acceptor is the glutamate 138. Zn(2+) is bound by residues glutamate 139, glutamate 167, and histidine 356.

It belongs to the peptidase M20A family. DapE subfamily. As to quaternary structure, homodimer. The cofactor is Zn(2+). Requires Co(2+) as cofactor.

The catalysed reaction is N-succinyl-(2S,6S)-2,6-diaminopimelate + H2O = (2S,6S)-2,6-diaminopimelate + succinate. It functions in the pathway amino-acid biosynthesis; L-lysine biosynthesis via DAP pathway; LL-2,6-diaminopimelate from (S)-tetrahydrodipicolinate (succinylase route): step 3/3. Catalyzes the hydrolysis of N-succinyl-L,L-diaminopimelic acid (SDAP), forming succinate and LL-2,6-diaminopimelate (DAP), an intermediate involved in the bacterial biosynthesis of lysine and meso-diaminopimelic acid, an essential component of bacterial cell walls. The polypeptide is Succinyl-diaminopimelate desuccinylase (Caulobacter vibrioides (strain ATCC 19089 / CIP 103742 / CB 15) (Caulobacter crescentus)).